A 416-amino-acid polypeptide reads, in one-letter code: Antigen EG13 (416 aa).

In terms of domain architecture, F-BAR spans 1–247; the sequence is MIQERADIEK…TVAKVDADAD (247 aa). Residues 297-327 form a disordered region; that stretch reads LKTFTSPDRGGPIPGTTDSGSNISTSPVHTT. The span at 312-327 shows a compositional bias: polar residues; it reads TTDSGSNISTSPVHTT. One can recognise an SH3 domain in the interval 361-416; it reads RPGVPIRALYDYVGVEADELSFNSGDLFEKLEDEDEQGWCKGRKDGRVGLYPRQLR.

This Echinococcus granulosus (Hydatid tapeworm) protein is Antigen EG13 (EG13).